The chain runs to 400 residues: Acetate kinase (400 aa).

N7 serves as a coordination point for Mg(2+). K14 provides a ligand contact to ATP. Substrate is bound at residue R92. Catalysis depends on D149, which acts as the Proton donor/acceptor. ATP is bound by residues H209–G213, D283–R285, and G331–N335. E385 is a Mg(2+) binding site.

This sequence belongs to the acetokinase family. In terms of assembly, homodimer. Mg(2+) serves as cofactor. Mn(2+) is required as a cofactor.

The protein resides in the cytoplasm. The enzyme catalyses acetate + ATP = acetyl phosphate + ADP. Its pathway is metabolic intermediate biosynthesis; acetyl-CoA biosynthesis; acetyl-CoA from acetate: step 1/2. Functionally, catalyzes the formation of acetyl phosphate from acetate and ATP. Can also catalyze the reverse reaction. The polypeptide is Acetate kinase (Helicobacter acinonychis (strain Sheeba)).